The chain runs to 164 residues: UPF0114 protein Sbal223_3668 (164 aa).

Transmembrane regions (helical) follow at residues 15–35 (IMAPIYLGLSLVLIGLGIKFF), 53–73 (LVLVTLSLIDITLVGGLIVMV), 108–128 (KVAASIVAISSIHLLKIFMDV), and 136–156 (IMWYLLIHITFVLSAFAMGYL).

Belongs to the UPF0114 family.

The protein resides in the cell membrane. In Shewanella baltica (strain OS223), this protein is UPF0114 protein Sbal223_3668.